The primary structure comprises 196 residues: Probable signal peptidase I-1 (196 aa).

The Cytoplasmic segment spans residues 1–16; the sequence is MQNSPIPSPWQFIKEN. The helical transmembrane segment at 17 to 35 threads the bilayer; the sequence is IPLLMVALVLALLLRFFVA. Residues 36-196 are Periplasmic-facing; sequence EPRYIPSDSM…FVPARTIINT (161 aa). Catalysis depends on residues S44 and K94.

The protein belongs to the peptidase S26 family.

It localises to the cell membrane. The catalysed reaction is Cleavage of hydrophobic, N-terminal signal or leader sequences from secreted and periplasmic proteins.. In Synechocystis sp. (strain ATCC 27184 / PCC 6803 / Kazusa), this protein is Probable signal peptidase I-1 (lepB1).